Here is a 476-residue protein sequence, read N- to C-terminus: Eukaryotic translation initiation factor 3 subunit L (476 aa).

In terms of domain architecture, PCI spans 257–452 (DAIRMFSHIL…DLDYALENDL (196 aa)).

This sequence belongs to the eIF-3 subunit L family. As to quaternary structure, component of the eukaryotic translation initiation factor 3 (eIF-3) complex.

Its subcellular location is the cytoplasm. Its function is as follows. Component of the eukaryotic translation initiation factor 3 (eIF-3) complex, which is involved in protein synthesis of a specialized repertoire of mRNAs and, together with other initiation factors, stimulates binding of mRNA and methionyl-tRNAi to the 40S ribosome. The eIF-3 complex specifically targets and initiates translation of a subset of mRNAs involved in cell proliferation. The polypeptide is Eukaryotic translation initiation factor 3 subunit L (Aspergillus oryzae (strain ATCC 42149 / RIB 40) (Yellow koji mold)).